The primary structure comprises 457 residues: Chromosomal replication initiator protein DnaA (457 aa).

The interval 1-90 (MDTNNNIEKE…HSVDVRIEVA (90 aa)) is domain I, interacts with DnaA modulators. A domain II region spans residues 91–112 (PKIQINAQSNINYKAIKTSVKD). The domain III, AAA+ region stretch occupies residues 113–323 (SYTFENFVVG…GAIIKISVNA (211 aa)). The ATP site is built by Gly153, Gly155, Lys156, and Thr157. The domain IV, binds dsDNA stretch occupies residues 324-457 (NLMNASIDLN…DKKTAFNSSE (134 aa)).

Belongs to the DnaA family. In terms of assembly, oligomerizes as a right-handed, spiral filament on DNA at oriC. Interacts via domain I with HobA. In a crystal with domains I and II of DnaA HobA forms tetramers with DnaA fragments bound at the dimer interface of the tetramer.

It is found in the cytoplasm. It localises to the cell inner membrane. Functionally, plays an essential role in the initiation and regulation of chromosomal replication. ATP-DnaA binds to the origin of replication (oriC) to initiate formation of the DNA replication initiation complex once per cell cycle. Binds the DnaA box (a 9 base pair repeat at the origin) and separates the double-stranded (ds)DNA. Forms a right-handed helical filament on oriC DNA; dsDNA binds to the exterior of the filament while single-stranded (ss)DNA is stabiized in the filament's interior. The ATP-DnaA-oriC complex binds and stabilizes one strand of the AT-rich DNA unwinding element (DUE), permitting loading of DNA polymerase. After initiation quickly degrades to an ADP-DnaA complex that is not apt for DNA replication. Binds acidic phospholipids. In terms of biological role, the DnaA box is 5'-TTATC[CA]A[CA]A-3' in this bacterium cycle. Multiple discrete DnaA-oriC complexes can be seen as DnaA levels increase. Binding of DnaA to oriC is increased by HobA; some chi-type structures can be seen by electron microscopy. Strand separation requires the DnaA boxes and adjacent DnaA-trio motifs but works equally well with ADP or ATP. The chain is Chromosomal replication initiator protein DnaA from Helicobacter pylori (strain ATCC 700392 / 26695) (Campylobacter pylori).